A 637-amino-acid chain; its full sequence is Formate--tetrahydrofolate ligase (637 aa).

ATP is bound at residue 81–88 (TPLGEGKS).

It belongs to the formate--tetrahydrofolate ligase family. Homodimer.

The enzyme catalyses (6S)-5,6,7,8-tetrahydrofolate + formate + ATP = (6R)-10-formyltetrahydrofolate + ADP + phosphate. It participates in one-carbon metabolism; tetrahydrofolate interconversion. The polypeptide is Formate--tetrahydrofolate ligase (Spinacia oleracea (Spinach)).